Reading from the N-terminus, the 243-residue chain is Venom nerve growth factor (243 aa).

Positions 1-18 (MSMLCYTLIIAFLIGIWA) are cleaved as a signal peptide. Positions 19–125 (APKSEDNVPL…TLNRNIWANN (107 aa)) are excised as a propeptide. Residues 47–66 (GLKTSRNTDQHHPTPKKSED) show a composition bias toward basic and acidic residues. The segment at 47–70 (GLKTSRNTDQHHPTPKKSEDQELG) is disordered. Disulfide bonds link cysteine 139-cysteine 204, cysteine 182-cysteine 232, and cysteine 192-cysteine 234. N-linked (GlcNAc...) asparagine glycosylation occurs at asparagine 148.

The protein belongs to the NGF-beta family. Homodimer. In terms of tissue distribution, expressed by the venom gland.

The protein localises to the secreted. In terms of biological role, nerve growth factor is important for the development and maintenance of the sympathetic and sensory nervous systems. It stimulates division and differentiation of sympathetic and embryonic sensory neurons as well as basal forebrain cholinergic neurons in the brain. Its relevance in the snake venom is not clear. However, it has been shown to inhibit metalloproteinase-dependent proteolysis of platelet glycoprotein Ib alpha, suggesting a metalloproteinase inhibition to prevent metalloprotease autodigestion and/or protection against prey proteases. Binds a lipid between the two protein chains in the homodimer. The lipid-bound form promotes histamine relase from mouse mast cells, contrary to the lipid-free form. In Bungarus multicinctus (Many-banded krait), this protein is Venom nerve growth factor.